The chain runs to 192 residues: Rho-related protein racC (192 aa).

GTP is bound at residue 13 to 20; that stretch reads GDGAVGKT. The Effector region signature appears at 35–43; that stretch reads YIPTVFDNY. GTP contacts are provided by residues 60–64 and 118–121; these read DTAGQ and TKLD. At Cys-189 the chain carries Cysteine methyl ester. Cys-189 carries S-geranylgeranyl cysteine lipidation. Residues 190-192 constitute a propeptide, removed in mature form; sequence IVM.

Belongs to the small GTPase superfamily. Rho family. As to quaternary structure, interacts with pakB.

The protein localises to the cell membrane. The polypeptide is Rho-related protein racC (racC) (Dictyostelium discoideum (Social amoeba)).